A 96-amino-acid polypeptide reads, in one-letter code: CAMPATH-1 antigen (96 aa).

The signal sequence occupies residues 1–23 (MNTFLLLLTISLLVVVQIQTGDL). Residue Asn26 is glycosylated (N-linked (GlcNAc...) asparagine). Gly70 is lipidated: GPI-anchor amidated glycine. The propeptide at 71–96 (ASSITDVGACTFLFFANTLMCLFYLS) is removed in mature form.

The protein resides in the cell membrane. Its function is as follows. May play a role in carrying and orienting carbohydrate, as well as having a more specific role. This is CAMPATH-1 antigen (Cd52) from Rattus norvegicus (Rat).